Here is a 363-residue protein sequence, read N- to C-terminus: Protein-arginine kinase (363 aa).

One can recognise a Phosphagen kinase C-terminal domain in the interval 24 to 254 (IVLSSRIRLA…AQLIEQERSA (231 aa)). Residues 27–31 (SSRIR), His92, Arg125, 176–180 (RASVM), and 207–212 (RGIYGE) each bind ATP. Residues 337 to 342 (RDIRRA) carry the RDXXRA motif of the pArg binding pocket involved in allosteric regulation motif.

It belongs to the ATP:guanido phosphotransferase family.

The catalysed reaction is L-arginyl-[protein] + ATP = N(omega)-phospho-L-arginyl-[protein] + ADP + H(+). Its activity is regulated as follows. Appears to be allosterically activated by the binding of pArg-containing polypeptides to the pArg-binding pocket localized in the C-terminal domain of McsB. Its function is as follows. Catalyzes the specific phosphorylation of arginine residues in a large number of proteins. Is part of the bacterial stress response system. Protein arginine phosphorylation has a physiologically important role and is involved in the regulation of many critical cellular processes, such as protein homeostasis, motility, competence, and stringent and stress responses, by regulating gene expression and protein activity. The polypeptide is Protein-arginine kinase (Bacillus licheniformis (strain ATCC 14580 / DSM 13 / JCM 2505 / CCUG 7422 / NBRC 12200 / NCIMB 9375 / NCTC 10341 / NRRL NRS-1264 / Gibson 46)).